We begin with the raw amino-acid sequence, 148 residues long: UPF0178 protein LPC_0108 (148 aa).

Belongs to the UPF0178 family.

The polypeptide is UPF0178 protein LPC_0108 (Legionella pneumophila (strain Corby)).